Here is a 185-residue protein sequence, read N- to C-terminus: Ribosome-recycling factor (185 aa).

This sequence belongs to the RRF family.

The protein localises to the cytoplasm. Responsible for the release of ribosomes from messenger RNA at the termination of protein biosynthesis. May increase the efficiency of translation by recycling ribosomes from one round of translation to another. This Buchnera aphidicola subsp. Acyrthosiphon pisum (strain 5A) protein is Ribosome-recycling factor.